Consider the following 338-residue polypeptide: Tetraacyldisaccharide 4'-kinase (338 aa).

Residue 61–68 (TLGGTGKT) coordinates ATP.

Belongs to the LpxK family.

It catalyses the reaction a lipid A disaccharide + ATP = a lipid IVA + ADP + H(+). It functions in the pathway glycolipid biosynthesis; lipid IV(A) biosynthesis; lipid IV(A) from (3R)-3-hydroxytetradecanoyl-[acyl-carrier-protein] and UDP-N-acetyl-alpha-D-glucosamine: step 6/6. In terms of biological role, transfers the gamma-phosphate of ATP to the 4'-position of a tetraacyldisaccharide 1-phosphate intermediate (termed DS-1-P) to form tetraacyldisaccharide 1,4'-bis-phosphate (lipid IVA). In Nitrosococcus oceani (strain ATCC 19707 / BCRC 17464 / JCM 30415 / NCIMB 11848 / C-107), this protein is Tetraacyldisaccharide 4'-kinase.